A 1070-amino-acid chain; its full sequence is Regulator of Ty1 transposition protein 107 (1070 aa).

BRCT domains are found at residues 2 to 103, 117 to 213, 260 to 352, and 369 to 453; these read STSL…QDSV, NPFH…LYHF, HPNK…FYMF, and PFHA…EQCY. Residue S304 is modified to Phosphoserine. T532 is modified (phosphothreonine). Residues 572–659 form a disordered region; the sequence is SRASFPVVDS…LQVQLGQRTK (88 aa). The span at 580–592 shows a compositional bias: basic and acidic residues; the sequence is DSKKSNLQKKDSN. 2 positions are modified to phosphoserine: S591 and S593. Basic and acidic residues-rich tracts occupy residues 603 to 615 and 622 to 645; these read CEGH…KEFT and DAPK…KKEE. Residue S720 is modified to Phosphoserine. Over residues 722 to 731 the composition is skewed to basic and acidic residues; the sequence is NDDHINDEKP. The segment at 722 to 753 is disordered; that stretch reads NDDHINDEKPAVNSKYTTPKTSQNITSGVDTP. Residues 735 to 753 show a composition bias toward polar residues; that stretch reads SKYTTPKTSQNITSGVDTP. 2 positions are modified to phosphoserine: S800 and S806. BRCT domains follow at residues 829–910 and 934–1049; these read FNEL…IDLL and GINE…CVES.

As to quaternary structure, forms a complex with the cullin-RING ligase (CRL) RTT101(MMS1-MMS22). Interacts with MMS22 and RTT101. Interacts with histone H2A; requires H2A to be phosphorylated (gamma-H2A). Interacts with RAD55. Post-translationally, phosphorylated by MEC1.

The protein localises to the nucleus. Its function is as follows. Required for resumption of chromosome replication after DNA damage, specifically in S phase. Is recruited to chromatin in the presence of RTT109 and RTT101 in response to stalled replication forks and acts as a scaffold during DNA repair. In Saccharomyces cerevisiae (strain ATCC 204508 / S288c) (Baker's yeast), this protein is Regulator of Ty1 transposition protein 107 (RTT107).